The sequence spans 438 residues: Probable phosphoglucosamine mutase (438 aa).

Ser91 (phosphoserine intermediate) is an active-site residue. Positions 91, 228, 230, and 232 each coordinate Mg(2+). Ser91 is modified (phosphoserine).

The protein belongs to the phosphohexose mutase family. Requires Mg(2+) as cofactor. Activated by phosphorylation.

It catalyses the reaction alpha-D-glucosamine 1-phosphate = D-glucosamine 6-phosphate. Functionally, catalyzes the conversion of glucosamine-6-phosphate to glucosamine-1-phosphate. This Methanocella arvoryzae (strain DSM 22066 / NBRC 105507 / MRE50) protein is Probable phosphoglucosamine mutase.